The primary structure comprises 487 residues: 6-phosphogluconate dehydrogenase, decarboxylating 3, chloroplastic (487 aa).

The residue at position 1 (Met-1) is an N-acetylmethionine. Residues 13 to 18 (GLAVMG), 36 to 38 (NRT), 80 to 82 (VKA), and Asn-108 each bind NADP(+). Substrate is bound by residues Asn-108 and 134-136 (SGG). Lys-188 (proton acceptor) is an active-site residue. 191-192 (HN) is a binding site for substrate. Catalysis depends on Glu-195, which acts as the Proton donor. Substrate contacts are provided by Tyr-196, Lys-266, Arg-293, Arg-458, and His-464.

The protein belongs to the 6-phosphogluconate dehydrogenase family. As to quaternary structure, forms homodimer. Forms heterodimers with PGD1 or PGD2.

Its subcellular location is the plastid. The protein localises to the chloroplast. The protein resides in the cytoplasm. It localises to the cytosol. It catalyses the reaction 6-phospho-D-gluconate + NADP(+) = D-ribulose 5-phosphate + CO2 + NADPH. It functions in the pathway carbohydrate degradation; pentose phosphate pathway; D-ribulose 5-phosphate from D-glucose 6-phosphate (oxidative stage): step 3/3. Functionally, catalyzes the oxidative decarboxylation of 6-phosphogluconate to ribulose 5-phosphate and CO(2), with concomitant reduction of NADP to NADPH. In Arabidopsis thaliana (Mouse-ear cress), this protein is 6-phosphogluconate dehydrogenase, decarboxylating 3, chloroplastic.